We begin with the raw amino-acid sequence, 456 residues long: Kynurenine 3-monooxygenase (456 aa).

It belongs to the aromatic-ring hydroxylase family. KMO subfamily. It depends on FAD as a cofactor.

The catalysed reaction is L-kynurenine + NADPH + O2 + H(+) = 3-hydroxy-L-kynurenine + NADP(+) + H2O. It functions in the pathway cofactor biosynthesis; NAD(+) biosynthesis; quinolinate from L-kynurenine: step 1/3. Functionally, catalyzes the hydroxylation of L-kynurenine (L-Kyn) to form 3-hydroxy-L-kynurenine (L-3OHKyn). Required for synthesis of quinolinic acid. The sequence is that of Kynurenine 3-monooxygenase from Xanthomonas campestris pv. campestris (strain 8004).